The following is a 547-amino-acid chain: CTP synthase (547 aa).

Residues 1 to 269 (MKTKFIFVTG…DQKVAIMLRL (269 aa)) are amidoligase domain. Residue Ser14 participates in CTP binding. UTP is bound at residue Ser14. ATP is bound by residues 15 to 20 (SLGKGL) and Asp72. 2 residues coordinate Mg(2+): Asp72 and Glu143. Residues 150–152 (DIE), 190–195 (KTKPTQ), and Lys226 each bind CTP. Residues 190–195 (KTKPTQ) and Lys226 each bind UTP. In terms of domain architecture, Glutamine amidotransferase type-1 spans 294 to 547 (TVAIVGKYVD…IGAAKKHAKV (254 aa)). An L-glutamine-binding site is contributed by Gly356. Cys383 functions as the Nucleophile; for glutamine hydrolysis in the catalytic mechanism. Residues 384–387 (LGMQ), Glu407, and Arg475 each bind L-glutamine. Active-site residues include His520 and Glu522.

Belongs to the CTP synthase family. As to quaternary structure, homotetramer.

The catalysed reaction is UTP + L-glutamine + ATP + H2O = CTP + L-glutamate + ADP + phosphate + 2 H(+). The enzyme catalyses L-glutamine + H2O = L-glutamate + NH4(+). It catalyses the reaction UTP + NH4(+) + ATP = CTP + ADP + phosphate + 2 H(+). It functions in the pathway pyrimidine metabolism; CTP biosynthesis via de novo pathway; CTP from UDP: step 2/2. Allosterically activated by GTP, when glutamine is the substrate; GTP has no effect on the reaction when ammonia is the substrate. The allosteric effector GTP functions by stabilizing the protein conformation that binds the tetrahedral intermediate(s) formed during glutamine hydrolysis. Inhibited by the product CTP, via allosteric rather than competitive inhibition. In terms of biological role, catalyzes the ATP-dependent amination of UTP to CTP with either L-glutamine or ammonia as the source of nitrogen. Regulates intracellular CTP levels through interactions with the four ribonucleotide triphosphates. The chain is CTP synthase from Desulfovibrio desulfuricans (strain ATCC 27774 / DSM 6949 / MB).